Consider the following 1507-residue polypeptide: ABC multidrug transporter SNQ2 (1507 aa).

Positions 1–73 are disordered; that stretch reads MSSSSEISVA…RSSTAELSPE (73 aa). Basic and acidic residues predominate over residues 41–55; that stretch reads RSHEDADGDDAHSDN. N-linked (GlcNAc...) asparagine glycosylation is found at Asn55 and Asn336. In terms of domain architecture, ABC transporter 1 spans 157-412; that stretch reads CLPYTIYKAI…FYRMGYECPP (256 aa). A run of 3 helical transmembrane segments spans residues 522-542, 556-576, and 605-625; these read AYTV…GSLY, GGVL…NLSF, and FPFR…LSGL. Asn626 carries N-linked (GlcNAc...) asparagine glycosylation. A helical transmembrane segment spans residues 635–655; it reads VYLFLTMCSESINALFELIAA. Residue Asn659 is glycosylated (N-linked (GlcNAc...) asparagine). 2 helical membrane-spanning segments follow: residues 665 to 685 and 773 to 793; these read SISG…IQLP and FGIM…ITEI. One can recognise an ABC transporter 2 domain in the interval 857-1099; sequence FIWRNVCYTI…LLSYFERNGA (243 aa). N-linked (GlcNAc...) asparagine glycosylation occurs at Asn878. 893-900 is a binding site for ATP; it reads GESGAGKT. A run of 3 helical transmembrane segments spans residues 1193-1213, 1220-1240, and 1270-1290; these read YIMS…FTFY, TGLQ…APAM, and LITQ…IFFV. Asn1311 carries N-linked (GlcNAc...) asparagine glycosylation. 2 helical membrane-spanning segments follow: residues 1314-1334 and 1339-1359; these read IMFQ…APNL and VILG…QPVS. Asn1428 is a glycosylation site (N-linked (GlcNAc...) asparagine). A helical transmembrane segment spans residues 1459–1479; it reads FGLYWAYIGFNICAMVAIYYI.

It belongs to the ABC transporter superfamily. ABCG family. PDR (TC 3.A.1.205) subfamily.

It localises to the cell membrane. Its function is as follows. ABC multidrug transporter involved in the response to azoles such as fluconazole, itraconazole, ketoconazole and voriconazole and contributes to the development of PDR1-dependent azole resistance. Plays a role in biofilm tolerance to fluconazole. Also confers resistance to 4-nitroquinoline-N-oxide (4-NQO). In Candida glabrata (strain ATCC 2001 / BCRC 20586 / JCM 3761 / NBRC 0622 / NRRL Y-65 / CBS 138) (Yeast), this protein is ABC multidrug transporter SNQ2.